Consider the following 410-residue polypeptide: Squalene synthase 1 (410 aa).

Position 2 is an N-acetylglycine (Gly2). Transmembrane regions (helical) follow at residues 283 to 303 (SIFR…ALCY) and 387 to 407 (QPNS…FAYL).

It belongs to the phytoene/squalene synthase family. The cofactor is Mg(2+). Requires Mn(2+) as cofactor. As to expression, expressed in all tissues analyzed (seedlings, cotyledons, inflorescences, siliques, leaves, stems and roots). Highly expressed in roots and pollen.

Its subcellular location is the endoplasmic reticulum membrane. It carries out the reaction 2 (2E,6E)-farnesyl diphosphate + NADPH + H(+) = squalene + 2 diphosphate + NADP(+). The catalysed reaction is 2 (2E,6E)-farnesyl diphosphate + NADH + H(+) = squalene + 2 diphosphate + NAD(+). It functions in the pathway terpene metabolism; lanosterol biosynthesis; lanosterol from farnesyl diphosphate: step 1/3. This is Squalene synthase 1 from Arabidopsis thaliana (Mouse-ear cress).